The sequence spans 957 residues: SLIT and NTRK-like protein 5 (957 aa).

An N-terminal signal peptide occupies residues 1 to 40; that stretch reads MHVCCPPVTLEQDLHRKMHSWMLQTLAFAVTSLVLSCAET. Topologically, residues 41-664 are extracellular; sequence IDYYGEICDN…GTGASSVPLS (624 aa). LRR repeat units follow at residues 82 to 103, 106 to 127, 130 to 151, 154 to 175, 178 to 199, and 201 to 222; these read PIYH…EFVN, GASI…AFHG, GLRR…TFLG, NLEY…AFGK, MLQV…LFRF, and PLTH…GLLQ. Asparagine 103 carries N-linked (GlcNAc...) asparagine glycosylation. The LRRCT 1 domain occupies 235–286; it reads NPWNCSCELISLKDWLDSISYSALVGDVVCETPFRLHGRDLDEVSKQELCPR. The disordered stretch occupies residues 317–358; it reads ATSSSAVYKPPLKPPKGTRQPNKPRVRPTSRQPSKDLGYSNY. The 43-residue stretch at 365-407 folds into the LRRNT domain; the sequence is QTKSPVPLECPTACTCNLQISDLGLNVNCQERKIESIAELQPK. LRR repeat units lie at residues 410 to 431, 434 to 455, 458 to 479, 482 to 503, 506 to 527, and 529 to 550; these read NPKK…DFLE, GLDL…AFGD, NLRR…LFYG, SLQY…TFDP, NLQL…VFSG, and TLLR…GVLD. In terms of domain architecture, LRRCT 2 spans 563 to 614; that stretch reads NPWDCTCDVVGMKLWIEQLKVGVLVDEVICKAPKKFAETYMRSIKSELLCPD. Residues 623–632 show a composition bias toward low complexity; sequence PTPSSIQVPS. Positions 623 to 642 are disordered; sequence PTPSSIQVPSRTNAATPAVR. An N-linked (GlcNAc...) asparagine glycan is attached at asparagine 644. The chain crosses the membrane as a helical span at residues 665–685; sequence VLILSLLLVFIMSVFVAAGLF. The Cytoplasmic segment spans residues 686 to 957; the sequence is VLVMKRRKKN…LEKQTTFSQF (272 aa). Residues 789 to 844 form a disordered region; the sequence is SNHHLQQQPPPPPQQPQQQPPPQMQMQPGEEERRESHHLRSPAYSVSTIEPREDLL. The segment covering 796-811 has biased composition (pro residues); sequence QPPPPPQQPQQQPPPQ.

Belongs to the SLITRK family. In the adult, significant expression is detected only in the brain. In the embryo, expressed in the subventricular zone, cortical plate, pyramidal layer of hippocampus, thalamus and hypothalamus.

The protein resides in the membrane. Functionally, suppresses neurite outgrowth. This chain is SLIT and NTRK-like protein 5 (Slitrk5), found in Mus musculus (Mouse).